Consider the following 24-residue polypeptide: Gaegurin-6 (24 aa).

A disulfide bridge connects residues Cys18 and Cys24.

The protein belongs to the frog skin active peptide (FSAP) family. Brevinin subfamily. In terms of assembly, monomer. As to expression, expressed by the skin glands.

It is found in the secreted. Has a non-hemolytic activity. Has a broad spectrum of activity against both Gram-positive and Gram-negative bacteria, fungi and protozoa. This is Gaegurin-6 (GGN6) from Glandirana rugosa (Japanese wrinkled frog).